We begin with the raw amino-acid sequence, 175 residues long: Sec-independent protein translocase protein TatB (175 aa).

A helical membrane pass occupies residues 1–21 (MLDLGLSKMALIGVVALVVLG). Residues 94-115 (SAVSPGGSAAADAPDGPSAASG) are compositionally biased toward low complexity. Disordered regions lie at residues 94 to 118 (SAVS…GEPS) and 153 to 175 (VQSG…ARFL). The span at 160-175 (VARHRPASLRRPARFL) shows a compositional bias: basic residues.

The protein belongs to the TatB family. In terms of assembly, the Tat system comprises two distinct complexes: a TatABC complex, containing multiple copies of TatA, TatB and TatC subunits, and a separate TatA complex, containing only TatA subunits. Substrates initially bind to the TatABC complex, which probably triggers association of the separate TatA complex to form the active translocon.

The protein localises to the cell inner membrane. Functionally, part of the twin-arginine translocation (Tat) system that transports large folded proteins containing a characteristic twin-arginine motif in their signal peptide across membranes. Together with TatC, TatB is part of a receptor directly interacting with Tat signal peptides. TatB may form an oligomeric binding site that transiently accommodates folded Tat precursor proteins before their translocation. The chain is Sec-independent protein translocase protein TatB from Burkholderia pseudomallei (strain 1106a).